The sequence spans 433 residues: ATP-dependent protease ATPase subunit HslU (433 aa).

ATP is bound by residues Val-18, 60–65 (GVGKTE), Asp-246, Glu-311, and Arg-383.

It belongs to the ClpX chaperone family. HslU subfamily. In terms of assembly, a double ring-shaped homohexamer of HslV is capped on each side by a ring-shaped HslU homohexamer. The assembly of the HslU/HslV complex is dependent on binding of ATP.

It localises to the cytoplasm. ATPase subunit of a proteasome-like degradation complex; this subunit has chaperone activity. The binding of ATP and its subsequent hydrolysis by HslU are essential for unfolding of protein substrates subsequently hydrolyzed by HslV. HslU recognizes the N-terminal part of its protein substrates and unfolds these before they are guided to HslV for hydrolysis. The polypeptide is ATP-dependent protease ATPase subunit HslU (Rhodopseudomonas palustris (strain BisB5)).